Here is a 222-residue protein sequence, read N- to C-terminus: 25 kDa elongation factor 1-beta (222 aa).

The segment covering 75–94 (TSASAPAKQAPKKAASAPAK) has biased composition (low complexity). The tract at residues 75-98 (TSASAPAKQAPKKAASAPAKQADE) is disordered.

The protein belongs to the EF-1-beta/EF-1-delta family. As to quaternary structure, EF-1 is composed of 4 subunits: alpha, beta, delta, and gamma.

In terms of biological role, EF-1-beta and EF-1-delta stimulate the exchange of GDP bound to EF-1-alpha to GTP. In Trypanosoma cruzi, this protein is 25 kDa elongation factor 1-beta.